Reading from the N-terminus, the 256-residue chain is Phosphatidylglycerol--prolipoprotein diacylglyceryl transferase 2 (256 aa).

3 consecutive transmembrane segments (helical) span residues Leu11 to Phe31, Phe46 to Ile66, and Phe83 to Cys103. An a 1,2-diacyl-sn-glycero-3-phospho-(1'-sn-glycerol)-binding site is contributed by Arg130. A run of 3 helical transmembrane segments spans residues Ala142 to Val162, Leu164 to Trp184, and Val221 to Leu241.

The protein belongs to the Lgt family.

It localises to the cell membrane. The catalysed reaction is L-cysteinyl-[prolipoprotein] + a 1,2-diacyl-sn-glycero-3-phospho-(1'-sn-glycerol) = an S-1,2-diacyl-sn-glyceryl-L-cysteinyl-[prolipoprotein] + sn-glycerol 1-phosphate + H(+). It participates in protein modification; lipoprotein biosynthesis (diacylglyceryl transfer). In terms of biological role, catalyzes the transfer of the diacylglyceryl group from phosphatidylglycerol to the sulfhydryl group of the N-terminal cysteine of a prolipoprotein, the first step in the formation of mature lipoproteins. This is Phosphatidylglycerol--prolipoprotein diacylglyceryl transferase 2 from Clostridium perfringens (strain 13 / Type A).